The following is a 364-amino-acid chain: Homeobox protein Nkx-2.3 (364 aa).

The interval 132–153 (GDCKAAEESERPKPRSRRKPRV) is disordered. Residues 135–144 (KAAEESERPK) are compositionally biased toward basic and acidic residues. The homeobox DNA-binding region spans 148–207 (RRKPRVLFSQAQVFELERRFKQQRYLSAPEREHLASSLKLTSTQVKIWFQNRRYKCKRQR).

It belongs to the NK-2 homeobox family.

It is found in the nucleus. Transcription factor. The chain is Homeobox protein Nkx-2.3 (NKX2-3) from Homo sapiens (Human).